Consider the following 180-residue polypeptide: Large ribosomal subunit protein bL17 (180 aa).

The segment at 134–180 (AQAKAKKAAAMPTEESEAKPAEEGDVVGASEPDAKAPEEPPAEAPEN) is disordered.

The protein belongs to the bacterial ribosomal protein bL17 family. Part of the 50S ribosomal subunit. Contacts protein L32.

This Mycobacterium tuberculosis (strain ATCC 25177 / H37Ra) protein is Large ribosomal subunit protein bL17.